We begin with the raw amino-acid sequence, 248 residues long: Ubiquinone biosynthesis O-methyltransferase (248 aa).

S-adenosyl-L-methionine contacts are provided by R41, G72, D93, and M136.

This sequence belongs to the methyltransferase superfamily. UbiG/COQ3 family.

The enzyme catalyses a 3-demethylubiquinol + S-adenosyl-L-methionine = a ubiquinol + S-adenosyl-L-homocysteine + H(+). It carries out the reaction a 3-(all-trans-polyprenyl)benzene-1,2-diol + S-adenosyl-L-methionine = a 2-methoxy-6-(all-trans-polyprenyl)phenol + S-adenosyl-L-homocysteine + H(+). It functions in the pathway cofactor biosynthesis; ubiquinone biosynthesis. O-methyltransferase that catalyzes the 2 O-methylation steps in the ubiquinone biosynthetic pathway. This is Ubiquinone biosynthesis O-methyltransferase from Sinorhizobium fredii (strain NBRC 101917 / NGR234).